The chain runs to 1014 residues: Latrophilin-like protein 1 (1014 aa).

An N-terminal signal peptide occupies residues 1 to 27 (MRRNKTTYSLLQTILVACLLTVTPTFA). A glycan (N-linked (GlcNAc...) asparagine) is linked at Asn4. Topologically, residues 28-555 (SNKPTTDESG…IDQTLLTLLT (528 aa)) are extracellular. The SUEL-type lectin domain maps to 43 to 134 (ICDGEAAELS…KYLEVKYNCV (92 aa)). One can recognise a GAIN-B domain in the interval 359–542 (ESNVIVQPAI…AVLMDVRGHD (184 aa)). N-linked (GlcNAc...) asparagine glycans are attached at residues Asn473 and Asn518. 2 cysteine pairs are disulfide-bonded: Cys497/Cys524 and Cys512/Cys526. Residues 497–542 (CVWWNHHELKWKPSGCKLSYHNKTMTSCDCTHLTHFAVLMDVRGHD) are GPS. The helical transmembrane segment at 556–576 (YVGCIISIICLLLTFFAYLIF) threads the bilayer. Residues 577–584 (SRNGGDRV) lie on the Cytoplasmic side of the membrane. A helical transmembrane segment spans residues 585 to 605 (FIHENLCLSLAIAEITFLAGI). Residues 606–613 (TRTEDSLQ) lie on the Extracellular side of the membrane. A helical transmembrane segment spans residues 614–634 (CGIIAVALMYMFLSALTWMLL). The Cytoplasmic segment spans residues 635–653 (EGYHIHRMLTEVFPSDPRR). A helical transmembrane segment spans residues 654-674 (FTYLLVGYIPPAIITLVAYLY). Topologically, residues 675–692 (NSDGFGTPDHCWLSTQNN) are extracellular. Residues 693–713 (FIWFFAGPACFIFCANSLVLV) form a helical membrane-spanning segment. Residues 714-745 (KTLCTVYQHTSGGYLPCRHDVDSGRSIRNWVK) are Cytoplasmic-facing. A helical transmembrane segment spans residues 746–766 (GSLALASLLGVTWIFGLFWVE). Residues 767–770 (DSRS) lie on the Extracellular side of the membrane. Residues 771–791 (IVMAYVFTISNSLQGLFIFLF) form a helical membrane-spanning segment. Over 792–1014 (HVVFAEKMRK…NKPSMYCQDL (223 aa)) the chain is Cytoplasmic. Disordered regions lie at residues 814–833 (GSSN…DLMS) and 932–994 (YQGW…EVTP). The span at 941–952 (PEFSPPPPPLST) shows a compositional bias: pro residues. Residues 965–986 (SGRRPPSSKMSDDSAYSDGSSS) are compositionally biased toward low complexity.

It belongs to the G-protein coupled receptor 2 family. LN-TM7 subfamily. In terms of assembly, monomer and homodimer. Post-translationally, autoproteolytically processed at the GPS region of the GAIN-B domain; this cleavage modulates receptor activity. Expressed in epidermal precursor cells and pharyngeal primordium. In adults expression is seen in pharyngeal muscle cells and nervous system, the nerve ring, the gonad, and the vulva.

The protein resides in the cell membrane. Has a role in the establishment of anterior-posterior polarity in tissues during embryogenesis. Required for the alignment of the mitotic spindles and division planes. May have a role in cell death events. Required for normal defection and oocyte fertilization. Involved in sperm function. Operates in pharyngeal pumping during feeding. This chain is Latrophilin-like protein 1, found in Caenorhabditis elegans.